The primary structure comprises 198 residues: Na(+)-translocating NADH-quinone reductase subunit E (198 aa).

Transmembrane regions (helical) follow at residues 11 to 31, 35 to 55, 77 to 97, 110 to 130, 140 to 160, and 176 to 196; these read AVFIENMALSFFLGMCTFLAV, VSTAFGLGIAVTFVLGIAVPV, FLNFITFIGVIAGLVQILEMV, GIFLPLIAVNCAIFGGVSFMV, IVYGFGSGLGWMLAIVALAGL, and LGITFISVGLMALGFMSFSGI.

The protein belongs to the NqrDE/RnfAE family. As to quaternary structure, composed of six subunits; NqrA, NqrB, NqrC, NqrD, NqrE and NqrF.

The protein localises to the cell inner membrane. The catalysed reaction is a ubiquinone + n Na(+)(in) + NADH + H(+) = a ubiquinol + n Na(+)(out) + NAD(+). NQR complex catalyzes the reduction of ubiquinone-1 to ubiquinol by two successive reactions, coupled with the transport of Na(+) ions from the cytoplasm to the periplasm. NqrA to NqrE are probably involved in the second step, the conversion of ubisemiquinone to ubiquinol. The chain is Na(+)-translocating NADH-quinone reductase subunit E from Haemophilus influenzae (strain 86-028NP).